Consider the following 445-residue polypeptide: Phosphoglucosamine mutase (445 aa).

Catalysis depends on serine 99, which acts as the Phosphoserine intermediate. Serine 99, aspartate 242, aspartate 244, and aspartate 246 together coordinate Mg(2+). The residue at position 99 (serine 99) is a Phosphoserine.

The protein belongs to the phosphohexose mutase family. The cofactor is Mg(2+). Activated by phosphorylation.

The catalysed reaction is alpha-D-glucosamine 1-phosphate = D-glucosamine 6-phosphate. Functionally, catalyzes the conversion of glucosamine-6-phosphate to glucosamine-1-phosphate. This is Phosphoglucosamine mutase from Helicobacter pylori (strain P12).